A 106-amino-acid chain; its full sequence is Hydrogenase expression/formation protein HoxL (106 aa).

The protein belongs to the HupF/HypC family.

This is Hydrogenase expression/formation protein HoxL (hoxL) from Azotobacter vinelandii.